Consider the following 355-residue polypeptide: 3-isopropylmalate dehydrogenase (355 aa).

4 residues coordinate substrate: Arg90, Arg100, Arg128, and Asp222. The Mg(2+) site is built by Asp222, Asp246, and Asp250. 280-292 (GSAPDIAGKGVAN) is a binding site for NAD(+).

It belongs to the isocitrate and isopropylmalate dehydrogenases family. LeuB type 1 subfamily. In terms of assembly, homodimer. The cofactor is Mg(2+). Mn(2+) is required as a cofactor.

Its subcellular location is the cytoplasm. The enzyme catalyses (2R,3S)-3-isopropylmalate + NAD(+) = 4-methyl-2-oxopentanoate + CO2 + NADH. It functions in the pathway amino-acid biosynthesis; L-leucine biosynthesis; L-leucine from 3-methyl-2-oxobutanoate: step 3/4. In terms of biological role, catalyzes the oxidation of 3-carboxy-2-hydroxy-4-methylpentanoate (3-isopropylmalate) to 3-carboxy-4-methyl-2-oxopentanoate. The product decarboxylates to 4-methyl-2 oxopentanoate. The chain is 3-isopropylmalate dehydrogenase from Cupriavidus metallidurans (strain ATCC 43123 / DSM 2839 / NBRC 102507 / CH34) (Ralstonia metallidurans).